The following is a 232-amino-acid chain: Ribose-5-phosphate isomerase A (232 aa).

Residues 28–31, 83–86, and 96–99 each bind substrate; these read TGST, DGAD, and KGGG. Catalysis depends on Glu-105, which acts as the Proton acceptor. Residue Lys-123 participates in substrate binding.

This sequence belongs to the ribose 5-phosphate isomerase family. In terms of assembly, homodimer.

The enzyme catalyses aldehydo-D-ribose 5-phosphate = D-ribulose 5-phosphate. The protein operates within carbohydrate degradation; pentose phosphate pathway; D-ribose 5-phosphate from D-ribulose 5-phosphate (non-oxidative stage): step 1/1. In terms of biological role, catalyzes the reversible conversion of ribose-5-phosphate to ribulose 5-phosphate. The chain is Ribose-5-phosphate isomerase A from Rhodopseudomonas palustris (strain BisB18).